Here is a 786-residue protein sequence, read N- to C-terminus: DNA ligase (786 aa).

Residues 32–36 (DAEYD), 81–82 (SL), and glutamate 121 contribute to the NAD(+) site. Lysine 123 (N6-AMP-lysine intermediate) is an active-site residue. Positions 144, 181, 297, and 321 each coordinate NAD(+). Cysteine 415, cysteine 418, cysteine 445, and cysteine 451 together coordinate Zn(2+). The BRCT domain maps to 703–786 (AEGLPLAGQT…EQLKSYGIEA (84 aa)).

Belongs to the NAD-dependent DNA ligase family. LigA subfamily. Requires Mg(2+) as cofactor. Mn(2+) serves as cofactor.

The enzyme catalyses NAD(+) + (deoxyribonucleotide)n-3'-hydroxyl + 5'-phospho-(deoxyribonucleotide)m = (deoxyribonucleotide)n+m + AMP + beta-nicotinamide D-nucleotide.. Its function is as follows. DNA ligase that catalyzes the formation of phosphodiester linkages between 5'-phosphoryl and 3'-hydroxyl groups in double-stranded DNA using NAD as a coenzyme and as the energy source for the reaction. It is essential for DNA replication and repair of damaged DNA. The polypeptide is DNA ligase (Ectopseudomonas mendocina (strain ymp) (Pseudomonas mendocina)).